A 184-amino-acid chain; its full sequence is MNRRSKWLWIEPITGSRKRSNFFWACILFLGSLGFFLVGISSYFGENLIPLLSSQQILFVPQGIVMCFYGIAGLFISSYLWCTILFNVGSGYNKFDKKKGIVCLFRWGFPGINRRIFPRFLMKDIQMIKMEIQEGISPRRVLYMEIKGRQDIPLTRTGDNVNLREIEQKAAESARFLRVSIEGF.

Transmembrane regions (helical) follow at residues 21–43 (NFFWACILFLGSLGFFLVGISSY) and 58–78 (LFVPQGIVMCFYGIAGLFISS).

The protein belongs to the Ycf4 family.

Its subcellular location is the plastid. The protein localises to the chloroplast thylakoid membrane. In terms of biological role, seems to be required for the assembly of the photosystem I complex. The protein is Photosystem I assembly protein Ycf4 of Pinus thunbergii (Japanese black pine).